The following is a 508-amino-acid chain: Photosystem II CP47 reaction center protein (508 aa).

The next 6 membrane-spanning stretches (helical) occupy residues 21 to 36 (SVHIMHTALVAGWAGS), 101 to 115 (IVFSGLCFLAAIWHW), 140 to 156 (GIHLFLAGVACFGFGAF), 203 to 218 (IAAGTLGILAGLFHLS), 237 to 252 (VLSSSIAAVFFAAFVV), and 457 to 472 (SFALLFFFGHIWHGAR).

Belongs to the PsbB/PsbC family. PsbB subfamily. As to quaternary structure, PSII is composed of 1 copy each of membrane proteins PsbA, PsbB, PsbC, PsbD, PsbE, PsbF, PsbH, PsbI, PsbJ, PsbK, PsbL, PsbM, PsbT, PsbX, PsbY, PsbZ, Psb30/Ycf12, at least 3 peripheral proteins of the oxygen-evolving complex and a large number of cofactors. It forms dimeric complexes. Binds multiple chlorophylls. PSII binds additional chlorophylls, carotenoids and specific lipids. serves as cofactor.

It localises to the plastid. The protein resides in the chloroplast thylakoid membrane. One of the components of the core complex of photosystem II (PSII). It binds chlorophyll and helps catalyze the primary light-induced photochemical processes of PSII. PSII is a light-driven water:plastoquinone oxidoreductase, using light energy to abstract electrons from H(2)O, generating O(2) and a proton gradient subsequently used for ATP formation. The sequence is that of Photosystem II CP47 reaction center protein from Lactuca sativa (Garden lettuce).